The following is a 128-amino-acid chain: Aspartate 1-decarboxylase (128 aa).

Ser25 (schiff-base intermediate with substrate; via pyruvic acid) is an active-site residue. Pyruvic acid (Ser) is present on Ser25. A substrate-binding site is contributed by Thr57. The active-site Proton donor is the Tyr58. 73–75 lines the substrate pocket; that stretch reads GAA.

This sequence belongs to the PanD family. In terms of assembly, heterooctamer of four alpha and four beta subunits. It depends on pyruvate as a cofactor. Post-translationally, is synthesized initially as an inactive proenzyme, which is activated by self-cleavage at a specific serine bond to produce a beta-subunit with a hydroxyl group at its C-terminus and an alpha-subunit with a pyruvoyl group at its N-terminus.

The protein localises to the cytoplasm. The enzyme catalyses L-aspartate + H(+) = beta-alanine + CO2. It functions in the pathway cofactor biosynthesis; (R)-pantothenate biosynthesis; beta-alanine from L-aspartate: step 1/1. Catalyzes the pyruvoyl-dependent decarboxylation of aspartate to produce beta-alanine. The protein is Aspartate 1-decarboxylase of Chlorobium phaeovibrioides (strain DSM 265 / 1930) (Prosthecochloris vibrioformis (strain DSM 265)).